Consider the following 183-residue polypeptide: Large ribosomal subunit protein uL6 (183 aa).

Belongs to the universal ribosomal protein uL6 family. In terms of assembly, part of the 50S ribosomal subunit.

This protein binds to the 23S rRNA, and is important in its secondary structure. It is located near the subunit interface in the base of the L7/L12 stalk, and near the tRNA binding site of the peptidyltransferase center. The protein is Large ribosomal subunit protein uL6 of Moorella thermoacetica (strain ATCC 39073 / JCM 9320).